The sequence spans 334 residues: MAGAQESLVLAGVMHGHNDVVTAIATPIDNSPFIVSSSRDKSLLVWDLTNPVQNVGEGAGASEYGVPFRRLTGHSHFVQDVVLSSDGQFALSGSWDGELRLWDLSTGVTTRRFVGHDKDVLSVAFSVDNRQIVSASRDRTIKLWNTLGECKYTIGGDLGGGEGHNGWVSCVRFSPNTFQPTIVSGSWDRTVKVWNLTNCKLRCNLEGHGGYVNAVAVSPDGSLCASGGKDGVTLLWDLAEGKRLYSLDAGSIIHSLCFSPNRYWLCAATQDSIKIWDLESKHIVQDLKPEIPVSKNQMLYCTSLNWSADGSTLYAGYTDGTIRIYKISGFSYAG.

7 WD repeats span residues G16–D47, G73–D103, G115–N145, G163–N195, G207–D237, D248–D277, and N296–K326.

This sequence belongs to the WD repeat G protein beta family. Ribosomal protein RACK1 subfamily. As to quaternary structure, interacts with RAC1, RAC3, RAC6, RAR1, SGT1 and RBOHB. Homodimer and heterodimer with RACK1B. As to expression, widely expressed.

It localises to the cytoplasm. It is found in the cell membrane. Its function is as follows. Component of the RACK1 regulatory proteins that functions in innate immunity by interacting with multiple proteins in the RAC1 immune complex. Acts as a positive regulator of reactive oxygen species (ROS) production and is required for resistance against rice blast (M.grisea) infection. This is Small ribosomal subunit protein RACK1z (RACK1A) from Oryza sativa subsp. japonica (Rice).